We begin with the raw amino-acid sequence, 469 residues long: NADH-quinone oxidoreductase subunit N (469 aa).

14 helical membrane-spanning segments follow: residues 9–29 (PLLM…LIAG), 40–60 (VGVM…VQMV), 76–96 (ATGV…AVAG), 105–125 (EAET…LAGA), 128–148 (LLLL…LVGL), 162–182 (YLMG…LYGL), 201–221 (VAVA…AGGV), 234–254 (ANAT…LVAL), 265–285 (LAWP…GNLA), 294–316 (RLLG…VAGA), 327–347 (YLGG…ALPG), 365–385 (AAAL…AVFI), 402–422 (LAVV…RWII), and 448–468 (VLAA…WQLV).

Belongs to the complex I subunit 2 family. NDH-1 is composed of 14 different subunits. Subunits NuoA, H, J, K, L, M, N constitute the membrane sector of the complex.

The protein resides in the cell membrane. It catalyses the reaction a quinone + NADH + 5 H(+)(in) = a quinol + NAD(+) + 4 H(+)(out). NDH-1 shuttles electrons from NADH, via FMN and iron-sulfur (Fe-S) centers, to quinones in the respiratory chain. The immediate electron acceptor for the enzyme in this species is believed to be a menaquinone. Couples the redox reaction to proton translocation (for every two electrons transferred, four hydrogen ions are translocated across the cytoplasmic membrane), and thus conserves the redox energy in a proton gradient. This chain is NADH-quinone oxidoreductase subunit N, found in Mycobacterium sp. (strain JLS).